A 74-amino-acid chain; its full sequence is Conotoxin TsMLCL-04 (74 aa).

An N-terminal signal peptide occupies residues 1–19; the sequence is MLCLPVFIILLLLASPAAP. Positions 20 to 60 are excised as a propeptide; that stretch reads NPLETRIQRDLIRAALEDADMKTNERFLEGVISTIKDFAGK.

Belongs to the conotoxin T superfamily. In terms of processing, contains 2 disulfide bonds that can be either 'C1-C3, C2-C4' or 'C1-C4, C2-C3', since these disulfide connectivities have been observed for conotoxins with cysteine framework V (for examples, see AC P0DQQ7 and AC P81755). Expressed by the venom duct.

It is found in the secreted. This is Conotoxin TsMLCL-04 from Conus tessulatus (Tessellate cone).